Reading from the N-terminus, the 221-residue chain is PKHD-type hydroxylase NATL1_16191 (221 aa).

Residues 80-174 (LIHGVMFTQS…RHVCVGWIQS (95 aa)) form the Fe2OG dioxygenase domain. 3 residues coordinate Fe cation: His98, Asp100, and His155. 2-oxoglutarate is bound at residue Arg165.

The cofactor is Fe(2+). L-ascorbate serves as cofactor.

The chain is PKHD-type hydroxylase NATL1_16191 from Prochlorococcus marinus (strain NATL1A).